The primary structure comprises 243 residues: MTMRTATITEFSSSYRSLPGLLHLLQFGDSALPIGGFSFSNGLESAIQQNLVHDKETLREFTLTAMNQAATSDGIALLTAHRAARADDRGALQVIDKAVFERKLNEETRLMTVRMGRKLCELSASIIDDRLNRDWLECIKTAETPGTHPVSLGLAFVALDVDGRDAFGAQQYGVATTILGAALRLMRVSFMDTQKILLEATSTVAPAYEEIADAGIEDMASFAPMVDILAAVHVKGHVRMFMN.

It belongs to the UreF family. UreD, UreF and UreG form a complex that acts as a GTP-hydrolysis-dependent molecular chaperone, activating the urease apoprotein by helping to assemble the nickel containing metallocenter of UreC. The UreE protein probably delivers the nickel.

The protein localises to the cytoplasm. Its function is as follows. Required for maturation of urease via the functional incorporation of the urease nickel metallocenter. This is Urease accessory protein UreF 2 from Brucella suis (strain ATCC 23445 / NCTC 10510).